The sequence spans 141 residues: Globin, extracellular monomeric (141 aa).

The Globin domain occupies 1-141; the sequence is ECDALQRFKV…LGVITGAIHD (141 aa). A disulfide bond links cysteine 2 and cysteine 131. Residue histidine 94 participates in heme b binding.

It belongs to the globin family. As to quaternary structure, the giant hemoglobins of worms are formed of a monomeric subunit and a disulfide-bonded trimer. This subunit is monomeric.

The protein localises to the secreted. This chain is Globin, extracellular monomeric, found in Tubifex tubifex (Sludge worm).